The primary structure comprises 271 residues: Carboxy-terminal domain RNA polymerase II polypeptide A small phosphatase 2 (271 aa).

A Phosphoserine modification is found at S5. In terms of domain architecture, FCP1 homology spans 97–255 (EDQGRICVVI…LNLIPIFEEL (159 aa)). D107 functions as the 4-aspartylphosphate intermediate in the catalytic mechanism. Mg(2+)-binding residues include D107, D109, and N218. D109 acts as the Proton donor in catalysis.

In terms of assembly, monomer. Interacts with REST. Requires Mg(2+) as cofactor. As to expression, expression is restricted to non-neuronal tissues. Highest expression in pancreas and lowest in liver.

It is found in the nucleus. The catalysed reaction is O-phospho-L-seryl-[protein] + H2O = L-seryl-[protein] + phosphate. It carries out the reaction O-phospho-L-threonyl-[protein] + H2O = L-threonyl-[protein] + phosphate. Preferentially catalyzes the dephosphorylation of 'Ser-5' within the tandem 7 residue repeats in the C-terminal domain (CTD) of the largest RNA polymerase II subunit POLR2A. Negatively regulates RNA polymerase II transcription, possibly by controlling the transition from initiation/capping to processive transcript elongation. Recruited by REST to neuronal genes that contain RE-1 elements, leading to neuronal gene silencing in non-neuronal cells. May contribute to the development of sarcomas. This Homo sapiens (Human) protein is Carboxy-terminal domain RNA polymerase II polypeptide A small phosphatase 2 (CTDSP2).